A 545-amino-acid polypeptide reads, in one-letter code: CTP synthase (545 aa).

Positions 1 to 266 are amidoligase domain; the sequence is MTHFIFVTGG…DDLICERFGF (266 aa). Serine 13 contributes to the CTP binding site. Serine 13 contributes to the UTP binding site. Residues 14 to 19 and aspartate 71 each bind ATP; that span reads SLGKGI. Mg(2+) contacts are provided by aspartate 71 and glutamate 140. CTP contacts are provided by residues 147-149, 187-192, and lysine 223; these read DIE and KTKPTQ. UTP contacts are provided by residues 187 to 192 and lysine 223; that span reads KTKPTQ. 239–241 serves as a coordination point for ATP; that stretch reads KDA. One can recognise a Glutamine amidotransferase type-1 domain in the interval 292 to 543; that stretch reads RVAMVGKYVE…IDAAKTQHQK (252 aa). Position 353 (glycine 353) interacts with L-glutamine. The active-site Nucleophile; for glutamine hydrolysis is cysteine 380. L-glutamine-binding positions include 381 to 384, glutamate 404, and arginine 471; that span reads LGMQ. Active-site residues include histidine 516 and glutamate 518.

This sequence belongs to the CTP synthase family. In terms of assembly, homotetramer.

The catalysed reaction is UTP + L-glutamine + ATP + H2O = CTP + L-glutamate + ADP + phosphate + 2 H(+). It carries out the reaction L-glutamine + H2O = L-glutamate + NH4(+). It catalyses the reaction UTP + NH4(+) + ATP = CTP + ADP + phosphate + 2 H(+). It participates in pyrimidine metabolism; CTP biosynthesis via de novo pathway; CTP from UDP: step 2/2. Its activity is regulated as follows. Allosterically activated by GTP, when glutamine is the substrate; GTP has no effect on the reaction when ammonia is the substrate. The allosteric effector GTP functions by stabilizing the protein conformation that binds the tetrahedral intermediate(s) formed during glutamine hydrolysis. Inhibited by the product CTP, via allosteric rather than competitive inhibition. Its function is as follows. Catalyzes the ATP-dependent amination of UTP to CTP with either L-glutamine or ammonia as the source of nitrogen. Regulates intracellular CTP levels through interactions with the four ribonucleotide triphosphates. In Acinetobacter baumannii (strain AB307-0294), this protein is CTP synthase.